Here is a 442-residue protein sequence, read N- to C-terminus: Putative zinc metalloprotease PM1991 (442 aa).

H21 is a binding site for Zn(2+). E22 is an active-site residue. Zn(2+) is bound at residue H25. A helical transmembrane segment spans residues 97 to 119 (AFVIAAGPIANFLFAILAYFTIY). Residues 198–286 (DWRFDPEKES…FSFVVLTPEL (89 aa)) form the PDZ domain. 2 helical membrane-spanning segments follow: residues 366 to 388 (IGLI…MNLF) and 418 to 440 (LSYR…NDFL).

Belongs to the peptidase M50B family. Requires Zn(2+) as cofactor.

It localises to the cell inner membrane. This is Putative zinc metalloprotease PM1991 from Pasteurella multocida (strain Pm70).